Here is a 308-residue protein sequence, read N- to C-terminus: Aspartate carbamoyltransferase catalytic subunit (308 aa).

Residues Arg55 and Thr56 each coordinate carbamoyl phosphate. Lys83 provides a ligand contact to L-aspartate. Carbamoyl phosphate is bound by residues Arg105, His133, and Gln136. Arg166 and Arg223 together coordinate L-aspartate. Carbamoyl phosphate is bound by residues Gly264 and Pro265.

It belongs to the aspartate/ornithine carbamoyltransferase superfamily. ATCase family. As to quaternary structure, heterododecamer (2C3:3R2) of six catalytic PyrB chains organized as two trimers (C3), and six regulatory PyrI chains organized as three dimers (R2).

The enzyme catalyses carbamoyl phosphate + L-aspartate = N-carbamoyl-L-aspartate + phosphate + H(+). Its pathway is pyrimidine metabolism; UMP biosynthesis via de novo pathway; (S)-dihydroorotate from bicarbonate: step 2/3. Its function is as follows. Catalyzes the condensation of carbamoyl phosphate and aspartate to form carbamoyl aspartate and inorganic phosphate, the committed step in the de novo pyrimidine nucleotide biosynthesis pathway. The chain is Aspartate carbamoyltransferase catalytic subunit from Salinispora tropica (strain ATCC BAA-916 / DSM 44818 / JCM 13857 / NBRC 105044 / CNB-440).